Consider the following 102-residue polypeptide: NADH-quinone oxidoreductase subunit K (102 aa).

A run of 3 helical transmembrane segments spans residues 5–25 (LSHY…GIFL), 31–51 (IVIL…MVAF), and 65–85 (LFIL…LVVF).

The protein belongs to the complex I subunit 4L family. As to quaternary structure, NDH-1 is composed of 14 different subunits. Subunits NuoA, H, J, K, L, M, N constitute the membrane sector of the complex.

The protein resides in the cell inner membrane. It carries out the reaction a quinone + NADH + 5 H(+)(in) = a quinol + NAD(+) + 4 H(+)(out). Its function is as follows. NDH-1 shuttles electrons from NADH, via FMN and iron-sulfur (Fe-S) centers, to quinones in the respiratory chain. The immediate electron acceptor for the enzyme in this species is believed to be ubiquinone. Couples the redox reaction to proton translocation (for every two electrons transferred, four hydrogen ions are translocated across the cytoplasmic membrane), and thus conserves the redox energy in a proton gradient. This chain is NADH-quinone oxidoreductase subunit K, found in Agrobacterium fabrum (strain C58 / ATCC 33970) (Agrobacterium tumefaciens (strain C58)).